We begin with the raw amino-acid sequence, 356 residues long: Histidinol-phosphate aminotransferase (356 aa).

At Lys-214 the chain carries N6-(pyridoxal phosphate)lysine.

The protein belongs to the class-II pyridoxal-phosphate-dependent aminotransferase family. Histidinol-phosphate aminotransferase subfamily. Homodimer. It depends on pyridoxal 5'-phosphate as a cofactor.

It catalyses the reaction L-histidinol phosphate + 2-oxoglutarate = 3-(imidazol-4-yl)-2-oxopropyl phosphate + L-glutamate. Its pathway is amino-acid biosynthesis; L-histidine biosynthesis; L-histidine from 5-phospho-alpha-D-ribose 1-diphosphate: step 7/9. This chain is Histidinol-phosphate aminotransferase, found in Aromatoleum aromaticum (strain DSM 19018 / LMG 30748 / EbN1) (Azoarcus sp. (strain EbN1)).